The chain runs to 604 residues: M-phase inducer phosphatase cdc-25.1 (604 aa).

Disordered regions lie at residues 33–67 and 127–188; these read PKTLFEEDGSSRDSGVSMTSCSDKSDASPEEDVDF and EKRV…PFGD. Over residues 44-54 the composition is skewed to polar residues; that stretch reads RDSGVSMTSCS. The segment covering 127–138 has biased composition (basic and acidic residues); it reads EKRVMSERPTDN. A Rhodanese domain is found at 305 to 413; that stretch reads FDKKYIIVDC…LWSTAECRQI (109 aa). Disordered regions lie at residues 443-464 and 562-588; these read ASLKPNGETSHREEKKKRCTRS and DFPDRPSESSSTTPAGEHLPLGEGGHQ.

This sequence belongs to the MPI phosphatase family.

The catalysed reaction is O-phospho-L-tyrosyl-[protein] + H2O = L-tyrosyl-[protein] + phosphate. The polypeptide is M-phase inducer phosphatase cdc-25.1 (cdc-25.1) (Caenorhabditis elegans).